Reading from the N-terminus, the 545-residue chain is Chaperonin GroEL (545 aa).

ATP is bound by residues 30–33 (TLGP), Lys51, 87–91 (DGTTT), Gly415, and Asp495.

The protein belongs to the chaperonin (HSP60) family. In terms of assembly, forms a cylinder of 14 subunits composed of two heptameric rings stacked back-to-back. Interacts with the co-chaperonin GroES.

Its subcellular location is the cytoplasm. The catalysed reaction is ATP + H2O + a folded polypeptide = ADP + phosphate + an unfolded polypeptide.. In terms of biological role, together with its co-chaperonin GroES, plays an essential role in assisting protein folding. The GroEL-GroES system forms a nano-cage that allows encapsulation of the non-native substrate proteins and provides a physical environment optimized to promote and accelerate protein folding. This Shewanella baltica (strain OS155 / ATCC BAA-1091) protein is Chaperonin GroEL.